Reading from the N-terminus, the 558-residue chain is MAETESRPTNFIRQIIDKDLQSGLHKQIHTRFPPEPNGYLHIGHAKSICLNFGIAQDYQGQCNLRFDDTNPDKEDIDYVNAIKNDVIWLGFEWHGEARYSSNYFDQLHAYAVELIEKGLAYVDFSNQEQVREMRGTLTTPGTNSPYRDTSIEENIAQFAKMRNGEYKEGECLLRAKIDMSSPFMCMRDPALYRVKFAHHHQTGDKWCIYPMYDFTHCISDAIEGITHSLCTLEFQDNRRLYDWVLENVTIDVVPRQYEFSRLNLEYTVLSKRKLIQLVDEEFVSGWDDPRMPTIAGLRRRGFTAASIREFCKRIGVTKMDNMVEMSMLEAPLRDELNENAPRAMAVLEPVKIVIENYPQDGVELLAAPNHPNRPELGSREVPFAREIYIEAEDFREEANKKFKRLVLGKEVRLRNAYVIKAQRVEKDEQGNVTTIFCEYDGDTLGKDPADGRKVKGVIHWVSAAHAVAAEIRLYDSLFTVPNPAAEDDFVACINPESLTVKQGWVEPSLAKVDIDEANIQAFQFERTGYFCFDKDSTTSKLVFNRTVGLRDTWAKIGD.

Residues 34–44 carry the 'HIGH' region motif; sequence PEPNGYLHIGH. Residues 35-37 and 41-47 contribute to the ATP site; these read EPN and HIGHAKS. Asp67 and Tyr212 together coordinate L-glutamine. ATP contacts are provided by residues Thr231, 261–262, and 269–271; these read RL and LSK. The short motif at 268–272 is the 'KMSKS' region element; it reads VLSKR.

This sequence belongs to the class-I aminoacyl-tRNA synthetase family. Monomer.

The protein resides in the cytoplasm. The enzyme catalyses tRNA(Gln) + L-glutamine + ATP = L-glutaminyl-tRNA(Gln) + AMP + diphosphate. This Pseudoalteromonas atlantica (strain T6c / ATCC BAA-1087) protein is Glutamine--tRNA ligase.